The chain runs to 55 residues: Probable Rubredoxin-2 (55 aa).

Residues methionine 4 to isoleucine 54 form the Rubredoxin-like domain. Fe cation contacts are provided by cysteine 9, cysteine 11, cysteine 41, and cysteine 44.

Belongs to the rubredoxin family. It depends on Fe(3+) as a cofactor.

In terms of biological role, rubredoxin is a small nonheme, iron protein lacking acid-labile sulfide. Its single Fe, chelated to 4 Cys, functions as an electron acceptor and may also stabilize the conformation of the molecule. The protein is Probable Rubredoxin-2 of Methanocaldococcus jannaschii (strain ATCC 43067 / DSM 2661 / JAL-1 / JCM 10045 / NBRC 100440) (Methanococcus jannaschii).